The primary structure comprises 416 residues: Glutamyl-tRNA reductase (416 aa).

Residues 46–49 (TCNR), serine 97, 102–104 (DHE), and glutamine 108 each bind substrate. Cysteine 47 functions as the Nucleophile in the catalytic mechanism. 178 to 183 (GAGMAA) provides a ligand contact to NADP(+).

The protein belongs to the glutamyl-tRNA reductase family. Homodimer.

The enzyme catalyses (S)-4-amino-5-oxopentanoate + tRNA(Glu) + NADP(+) = L-glutamyl-tRNA(Glu) + NADPH + H(+). Its pathway is porphyrin-containing compound metabolism; protoporphyrin-IX biosynthesis; 5-aminolevulinate from L-glutamyl-tRNA(Glu): step 1/2. Functionally, catalyzes the NADPH-dependent reduction of glutamyl-tRNA(Glu) to glutamate 1-semialdehyde (GSA). This Aeropyrum pernix (strain ATCC 700893 / DSM 11879 / JCM 9820 / NBRC 100138 / K1) protein is Glutamyl-tRNA reductase.